Reading from the N-terminus, the 95-residue chain is Aspartyl/glutamyl-tRNA(Asn/Gln) amidotransferase subunit C (95 aa).

The protein belongs to the GatC family. As to quaternary structure, heterotrimer of A, B and C subunits.

It carries out the reaction L-glutamyl-tRNA(Gln) + L-glutamine + ATP + H2O = L-glutaminyl-tRNA(Gln) + L-glutamate + ADP + phosphate + H(+). The enzyme catalyses L-aspartyl-tRNA(Asn) + L-glutamine + ATP + H2O = L-asparaginyl-tRNA(Asn) + L-glutamate + ADP + phosphate + 2 H(+). Allows the formation of correctly charged Asn-tRNA(Asn) or Gln-tRNA(Gln) through the transamidation of misacylated Asp-tRNA(Asn) or Glu-tRNA(Gln) in organisms which lack either or both of asparaginyl-tRNA or glutaminyl-tRNA synthetases. The reaction takes place in the presence of glutamine and ATP through an activated phospho-Asp-tRNA(Asn) or phospho-Glu-tRNA(Gln). This is Aspartyl/glutamyl-tRNA(Asn/Gln) amidotransferase subunit C from Methylobacterium radiotolerans (strain ATCC 27329 / DSM 1819 / JCM 2831 / NBRC 15690 / NCIMB 10815 / 0-1).